The sequence spans 188 residues: Phosphatidylinositol N-acetylglucosaminyltransferase subunit H (188 aa).

The protein belongs to the PIGH family. In terms of assembly, component of the glycosylphosphatidylinositol-N-acetylglucosaminyltransferase (GPI-GnT) complex composed at least by PIGA, PIGC, PIGH, PIGP, PIGQ, PIGY and DPM2. Interacts with PIGQ.

Its subcellular location is the cytoplasm. Its pathway is glycolipid biosynthesis; glycosylphosphatidylinositol-anchor biosynthesis. Functionally, part of the glycosylphosphatidylinositol-N-acetylglucosaminyltransferase (GPI-GnT) complex that catalyzes the transfer of N-acetylglucosamine from UDP-N-acetylglucosamine to phosphatidylinositol and participates in the first step of GPI biosynthesis. The chain is Phosphatidylinositol N-acetylglucosaminyltransferase subunit H from Bos taurus (Bovine).